We begin with the raw amino-acid sequence, 159 residues long: Small ribosomal subunit protein uS9 (159 aa).

This sequence belongs to the universal ribosomal protein uS9 family.

In Methylocella silvestris (strain DSM 15510 / CIP 108128 / LMG 27833 / NCIMB 13906 / BL2), this protein is Small ribosomal subunit protein uS9.